The sequence spans 365 residues: MGGGGDGELSPAEARLAMMELANMISVPMALTAVIRLGVPAKLWAGGANAPLAAADLLPAGHPDPSVLERLLRLLASRGVFSEHTGSSSPSPRRFSLTAVGRTLVPGGGGSPSGSGASYADYVLQHHQDALVRAWPLLHEAVLDPSGPEPFARANAGVPAYAYYGKDREANEVMLRAMTGVSEPFMEALLEGYGDGGFEGVSTLVDVGGSSGACLEMIMRRVRTIRDGVNFDLPDVVAAAPPIPGVRHVGGDMFKSIPSGDAIFMKWVLTTWTNEECTAILSNCHKALPGGGKVIACEPVVPDTTDGSTRTRALLENDIFVMATYRTQGRERSEEEFRHLGLAAGFASFRAIYLDPFYAVLEYTK.

Asp232 is an S-adenosyl-L-methionine binding site.

It belongs to the class I-like SAM-binding methyltransferase superfamily. Cation-independent O-methyltransferase family.

The catalysed reaction is nicotinate + S-adenosyl-L-methionine = N-methylnicotinate + S-adenosyl-L-homocysteine. Involved in nicotinate detoxification in planta. Catalyzes the conversion of nicotinate to N-methylnicotinate, which is a detoxified form of endogenous nicotinate in planta. The sequence is that of Nicotinate N-methyltransferase 1 from Oryza sativa subsp. japonica (Rice).